The sequence spans 105 residues: uncharacterized protein (105 aa).

The next 2 membrane-spanning stretches (helical) occupy residues 10–30 (YVVFIISLIVLLIIFYVFKIG) and 48–68 (YPLAISLVIWVIWYFLLYPPS).

The protein localises to the membrane. This is an uncharacterized protein from Acanthamoeba polyphaga mimivirus (APMV).